The chain runs to 120 residues: Large ribosomal subunit protein uL18 (120 aa).

The protein belongs to the universal ribosomal protein uL18 family. In terms of assembly, part of the 50S ribosomal subunit; part of the 5S rRNA/L5/L18/L25 subcomplex. Contacts the 5S and 23S rRNAs.

Its function is as follows. This is one of the proteins that bind and probably mediate the attachment of the 5S RNA into the large ribosomal subunit, where it forms part of the central protuberance. This is Large ribosomal subunit protein uL18 from Geobacillus kaustophilus (strain HTA426).